The following is a 421-amino-acid chain: ATP-dependent RNA helicase RhlB (421 aa).

A Q motif motif is present at residues 9 to 37; that stretch reads QKFSDFALHPQVVEALEKKRFYNCTPIQA. Residues 40 to 219 enclose the Helicase ATP-binding domain; it reads LPLTLAGRDV…FEQMNNAEYV (180 aa). Residue 53–60 coordinates ATP; that stretch reads AQTGTGKT. The DEAD box motif lies at 165 to 168; that stretch reads DEAD. The Helicase C-terminal domain maps to 245–390; the sequence is RLLQTLIEEE…VSKYNPEALM (146 aa). The segment at 396–421 is disordered; the sequence is PLRLTRSRPGNGPRRAGAPRNRRRSG. Residues 402–414 show a composition bias toward low complexity; the sequence is SRPGNGPRRAGAP.

This sequence belongs to the DEAD box helicase family. RhlB subfamily. Component of the RNA degradosome, which is a multiprotein complex involved in RNA processing and mRNA degradation.

The protein localises to the cytoplasm. The catalysed reaction is ATP + H2O = ADP + phosphate + H(+). In terms of biological role, DEAD-box RNA helicase involved in RNA degradation. Has RNA-dependent ATPase activity and unwinds double-stranded RNA. This is ATP-dependent RNA helicase RhlB from Salmonella dublin (strain CT_02021853).